Consider the following 158-residue polypeptide: Lipoprotein signal peptidase (158 aa).

A run of 3 helical transmembrane segments spans residues 4–24, 63–83, and 88–108; these read KYYITISLIVAIAILIIDQVT, KMGFFYIITIVILIVLVLFYI, and YNLFMQVAISLLFAGALGNFI. Residues D118 and D136 contribute to the active site. A helical transmembrane segment spans residues 131–151; it reads IFNVADSSLTIGVLFIIIALL.

The protein belongs to the peptidase A8 family.

The protein localises to the cell membrane. It catalyses the reaction Release of signal peptides from bacterial membrane prolipoproteins. Hydrolyzes -Xaa-Yaa-Zaa-|-(S,diacylglyceryl)Cys-, in which Xaa is hydrophobic (preferably Leu), and Yaa (Ala or Ser) and Zaa (Gly or Ala) have small, neutral side chains.. It participates in protein modification; lipoprotein biosynthesis (signal peptide cleavage). Functionally, this protein specifically catalyzes the removal of signal peptides from prolipoproteins. The polypeptide is Lipoprotein signal peptidase (Staphylococcus haemolyticus (strain JCSC1435)).